Here is a 293-residue protein sequence, read N- to C-terminus: MSLSKCSNVDLKSVAMNANTVRLEPSLGEYPTLRRDLVECSCSVLTLSMVKRMGKMTNTVWLFGNPKNPLHQLEPGLEQLLDMYYKDMRCYSQRELSALRWPSGKPSVWFLQAAHMFFSIKNSWAMETGRENWRGLFHRITKGQKYLFEGDMILDSLEAIEKRRLRLGLPEILITGLSPILDVALLQIESLARLRGMSLNHHLFTSPSLRKPLLDCWDFFIPVRKKKTDGSYSVLDEDDEPGVLHGYPHLMAHYLNRCPFHNLIRFDEELRTAALNTIWGRDWPAIGDLPKEV.

The interval 21–29 (VRLEPSLGE) is essential for inhibition of IFN-beta activation and interaction with host TBK1. The interval 66–69 (PKNP) is involved in inclusion bodies formation. An interaction with host TNIP2 region spans residues 148–220 (FEGDMILDSL…KPLLDCWDFF (73 aa)).

Belongs to the Bandavirus NS-S protein family. Interacts with the host E3 ubiquitin ligase TRIM25; this interaction sequesters TRIM25 in NSs-induced cytoplasmic inclusion bodies. Interacts with the host E3 ubiquitin ligase RIGI; this interaction sequesters RIGI in NSs-induced cytoplasmic inclusion bodies. Interacts with the host E3 ubiquitin ligase TBK1 (via N-terminus); this interaction sequesters TBK1 in NSs-induced cytoplasmic inclusion bodies and inhibits TBK1 phosphorylation. NSs does not interact with IKBKE/IKKE or IRF3. Interacts with host IRF7; this interaction sequesters IRF7 in NSs-induced cytoplasmic inclusion bodies. Interacts with host SYNGR2; this interaction is essential to promoting the formation of the inclusion bodies to become virus factories for viral RNA replication through its interaction with NSs. Interacts with host STAT2; this interaction sequesters STAT2 in NSs-induced cytoplasmic inclusion bodies. Interacts with host TNIP2; this interaction promotes TPL2 complex formation and signaling activity leading to IL-10 production. Interacts with host TRIM21 (via B30.2/SPRY domain); this interaction activates host NFE2L2-mediated transcriptional activation of antioxidant genes. Interacts with host CDK1; this interaction is inclusion body dependent, it inhibits the formation and nuclear import of the cyclin B1-CDK1 complex and leads to host cell cycle arrest.

The protein resides in the host cytoplasm. It is found in the host cytoplasmic vesicle. Functionally, sequesters host STAT2 into viral inclusion bodies. Impairs IFN-stimulated phosphorylation and nuclear translocation of host STAT2, thereby suppressing type-I IFN antiviral signaling. Sequesters host TRIM25, RIGI, TBK1/IKK complex components (TBK1, IKBKE/IKKE, and IRF3) and IRF7 into viral inclusion bodies, thereby inhibiting the IFN responses. Inhibits TRIM25-mediated ubiquitination of the RIGI. The sequestration of IKBKE/IKKE, and IRF3 occurs via the interaction with TBK1. Sequestration and inhibition of host TBK1 probably participates to the cytokine storm induced by the virus. Also inhibits the phosphorylation of host TBK1. Interacts with host TNIP2 and promotes TPL2-TNIP2-p105 complex formation leading to IL-10 induction. By interacting with CDK1, induces host cell arrest at the G2/M transition to promote viral replication. Requested for the formation of the viral cytoplasmic inclusion bodies. This SFTS phlebovirus (isolate SFTSV/Human/China/HB29/2010) (Severe fever with thrombocytopenia virus) protein is Non-structural protein NS-S (NSS).